Here is a 62-residue protein sequence, read N- to C-terminus: Snaclec aspercetin subunit beta (62 aa).

A disulfide bond links cysteine 2 and cysteine 13. A C-type lectin domain is found at 9 to 62 (YEGHCYRVFKPPKDWADAERFCSQQAKGGHLVSIERFGREDFVSNLITKNLQRG).

Belongs to the snaclec family. In terms of assembly, heterodimer; disulfide-linked. Expressed by the venom gland.

Its subcellular location is the secreted. Its function is as follows. Snaclec that binds to von Willebrand factor (VWF) and induces its interaction with GPIbalpha (GP1BA) (via the vWF A1 domain), resulting in platelet aggregation. Intramuscular and intravenous injections in mice induce a dose-dependent drop in platelet count (thrombocytopenia). Pretreatment by intravenous injection by this protein in mice potentiates the hemorrhagic lesion in the skin provoked by the metalloproteinase BaP1 intradermally injected. This result is not observed when both BaP1 and this protein are injected simultaneously. The protein is Snaclec aspercetin subunit beta of Bothrops asper (Terciopelo).